Consider the following 326-residue polypeptide: ATP-dependent 6-phosphofructokinase (326 aa).

Residue Gly14 participates in ATP binding. An ADP-binding site is contributed by Arg24–Arg28. ATP contacts are provided by residues Arg75–Phe76 and Gly105–Ser108. Asn106 contributes to the Mg(2+) binding site. Substrate is bound at residue Thr129–Asp131. Asp131 acts as the Proton acceptor in catalysis. Position 158 (Arg158) interacts with ADP. Substrate is bound by residues Arg166 and Met173–Arg175. ADP is bound by residues Gly189–Glu191, Lys215, and Lys216–Ala218. Substrate contacts are provided by residues Glu225, Arg248, and His254 to Arg257.

This sequence belongs to the phosphofructokinase type A (PFKA) family. ATP-dependent PFK group I subfamily. Prokaryotic clade 'B1' sub-subfamily. In terms of assembly, homotetramer. It depends on Mg(2+) as a cofactor.

The protein resides in the cytoplasm. It catalyses the reaction beta-D-fructose 6-phosphate + ATP = beta-D-fructose 1,6-bisphosphate + ADP + H(+). It participates in carbohydrate degradation; glycolysis; D-glyceraldehyde 3-phosphate and glycerone phosphate from D-glucose: step 3/4. Allosterically activated by ADP and other diphosphonucleosides, and allosterically inhibited by phosphoenolpyruvate. Its function is as follows. Catalyzes the phosphorylation of D-fructose 6-phosphate to fructose 1,6-bisphosphate by ATP, the first committing step of glycolysis. In Coxiella burnetii (strain RSA 493 / Nine Mile phase I), this protein is ATP-dependent 6-phosphofructokinase.